A 715-amino-acid chain; its full sequence is Poly(A) polymerase alpha-A (715 aa).

Residues 82-84, threonine 91, 95-97, aspartate 149, lysine 210, tyrosine 219, and 228-229 each bind ATP; these read FGP, DID, and GV. The Mg(2+) site is built by aspartate 95, aspartate 97, and aspartate 149. Residues 472–489 carry the Nuclear localization signal 1 motif; it reads RKQLHQLQPSHVSPKKKK. Disordered regions lie at residues 510 to 543, 560 to 590, and 607 to 693; these read DSDN…PAAP, QNNS…TPKP, and KPVS…DLSD. Polar residues-rich tracts occupy residues 515–539 and 560–588; these read MSVP…QGNS and QNNS…SSTP. Positions 624–639 match the Nuclear localization signal 2 motif; sequence KRTSSPSNEDSPKKNK. The segment covering 655-673 has biased composition (basic and acidic residues); that stretch reads DQNKLETEELKEVHSEEKS. Residues 674-692 show a composition bias toward polar residues; that stretch reads SSPVPGSLPFSQQSSTDLS.

It belongs to the poly(A) polymerase family. In terms of assembly, monomer. Mg(2+) is required as a cofactor. Requires Mn(2+) as cofactor.

It is found in the nucleus. The enzyme catalyses RNA(n) + ATP = RNA(n)-3'-adenine ribonucleotide + diphosphate. Polymerase that creates the 3'-poly(A) tail of mRNA's. May acquire specificity through interaction with a cleavage and polyadenylation factor (CPSF). The chain is Poly(A) polymerase alpha-A (papola-a) from Xenopus laevis (African clawed frog).